A 251-amino-acid chain; its full sequence is Flap endonuclease Xni (251 aa).

Asp-104 is a Mg(2+) binding site. The 5'-3' exonuclease domain maps to 160 to 249 (VQPQQLPDYW…IDGNLQQLRL (90 aa)). K(+) contacts are provided by Leu-171, Ala-172, Pro-180, Val-182, and Ile-185. The interval 184 to 189 (GIGPKS) is interaction with DNA.

Belongs to the Xni family. Requires Mg(2+) as cofactor. K(+) is required as a cofactor.

Functionally, has flap endonuclease activity. During DNA replication, flap endonucleases cleave the 5'-overhanging flap structure that is generated by displacement synthesis when DNA polymerase encounters the 5'-end of a downstream Okazaki fragment. The chain is Flap endonuclease Xni from Escherichia coli O45:K1 (strain S88 / ExPEC).